The chain runs to 380 residues: Erythronate-4-phosphate dehydrogenase (380 aa).

S45 and T66 together coordinate substrate. Residues D146, T174, 205–207 (ASR), and D231 contribute to the NAD(+) site. Residue R207 is part of the active site. E236 is an active-site residue. H253 (proton donor) is an active-site residue. G256 is an NAD(+) binding site. Y257 is a substrate binding site.

The protein belongs to the D-isomer specific 2-hydroxyacid dehydrogenase family. PdxB subfamily. In terms of assembly, homodimer.

The protein resides in the cytoplasm. It catalyses the reaction 4-phospho-D-erythronate + NAD(+) = (R)-3-hydroxy-2-oxo-4-phosphooxybutanoate + NADH + H(+). It participates in cofactor biosynthesis; pyridoxine 5'-phosphate biosynthesis; pyridoxine 5'-phosphate from D-erythrose 4-phosphate: step 2/5. Functionally, catalyzes the oxidation of erythronate-4-phosphate to 3-hydroxy-2-oxo-4-phosphonooxybutanoate. The chain is Erythronate-4-phosphate dehydrogenase from Pseudomonas putida (strain W619).